The following is a 168-amino-acid chain: DNA-binding protein inhibitor ID-1 (168 aa).

One can recognise a bHLH domain in the interval 46–98; that stretch reads LPALLDEQQVNVLLYDMNGCYSRLKELVPTLPQNRKVSKVEILQHVIDYIRDL. The tract at residues 53–106 is interaction with IFI204; it reads QQVNVLLYDMNGCYSRLKELVPTLPQNRKVSKVEILQHVIDYIRDLQLELNSES. Residues 91-104 carry the Nuclear export signal motif; sequence VIDYIRDLQLELNS.

As to quaternary structure, heterodimer with other HLH proteins. Interacts with CLOCK and BMAL1. Interacts with COPS5, IFI204, GATA4 and NKX2-5. In terms of processing, polyubiquitinated; which is favored by Ifi204 and leads to proteasomal degradation.

The protein localises to the cytoplasm. It localises to the nucleus. Its function is as follows. Transcriptional regulator (lacking a basic DNA binding domain) which negatively regulates the basic helix-loop-helix (bHLH) transcription factors by forming heterodimers and inhibiting their DNA binding and transcriptional activity. Implicated in regulating a variety of cellular processes, including cellular growth, senescence, differentiation, apoptosis, angiogenesis, and neoplastic transformation. Inhibits skeletal muscle and cardiac myocyte differentiation. Regulates the circadian clock by repressing the transcriptional activator activity of the CLOCK-BMAL1 heterodimer. The sequence is that of DNA-binding protein inhibitor ID-1 (Id1) from Mus musculus (Mouse).